We begin with the raw amino-acid sequence, 405 residues long: Type II secretion system protein F (405 aa).

Residues 1 to 169 lie on the Cytoplasmic side of the membrane; it reads MPLYRYKALD…SRALKGKVIN (169 aa). Asp-98, Gln-151, and Asp-155 together coordinate Ca(2+). A helical transmembrane segment spans residues 170-190; the sequence is ALIYPAILLAVVGCALLFLLG. The Periplasmic portion of the chain corresponds to 191–218; it reads YVVPQFAQMYESLDVALPWFTQAVLSVG. The chain crosses the membrane as a helical span at residues 219-239; it reads LLVRDWWLVLVVIPGVLGLWL. The Cytoplasmic segment spans residues 240–370; the sequence is DRKRRNAAFR…LETAQAIDRA (131 aa). Residues 371–391 traverse the membrane as a helical segment; that stretch reads LAALVPLITLVLASVVGLVII. Over 392–405 the chain is Periplasmic; the sequence is SVLVPLYDLTNAIG.

The protein belongs to the GSP F family. Type II secretion system is composed of four main components: the outer membrane complex, the inner membrane complex, the cytoplasmic secretion ATPase and the periplasm-spanning pseudopilus. Homodimer. Interacts with XpsE and XpsL components.

The protein localises to the cell inner membrane. In terms of biological role, component of the type II secretion system inner membrane complex required for the energy-dependent secretion of extracellular factors such as proteases and toxins from the periplasm. This chain is Type II secretion system protein F (xpsF), found in Xanthomonas campestris pv. campestris (strain ATCC 33913 / DSM 3586 / NCPPB 528 / LMG 568 / P 25).